The following is a 504-amino-acid chain: Maturase K (504 aa).

This sequence belongs to the intron maturase 2 family. MatK subfamily.

The protein localises to the plastid. It localises to the chloroplast. Functionally, usually encoded in the trnK tRNA gene intron. Probably assists in splicing its own and other chloroplast group II introns. This is Maturase K from Kokia drynarioides (Hawaiian tree cotton).